A 290-amino-acid polypeptide reads, in one-letter code: Lipoyl synthase (290 aa).

Positions 44, 49, 55, 70, 74, 77, and 281 each coordinate [4Fe-4S] cluster. A Radical SAM core domain is found at 56–270; it reads WRCGTATFMI…KQIGLEKGFS (215 aa).

This sequence belongs to the radical SAM superfamily. Lipoyl synthase family. The cofactor is [4Fe-4S] cluster.

It is found in the cytoplasm. It catalyses the reaction [[Fe-S] cluster scaffold protein carrying a second [4Fe-4S](2+) cluster] + N(6)-octanoyl-L-lysyl-[protein] + 2 oxidized [2Fe-2S]-[ferredoxin] + 2 S-adenosyl-L-methionine + 4 H(+) = [[Fe-S] cluster scaffold protein] + N(6)-[(R)-dihydrolipoyl]-L-lysyl-[protein] + 4 Fe(3+) + 2 hydrogen sulfide + 2 5'-deoxyadenosine + 2 L-methionine + 2 reduced [2Fe-2S]-[ferredoxin]. It participates in protein modification; protein lipoylation via endogenous pathway; protein N(6)-(lipoyl)lysine from octanoyl-[acyl-carrier-protein]: step 2/2. In terms of biological role, catalyzes the radical-mediated insertion of two sulfur atoms into the C-6 and C-8 positions of the octanoyl moiety bound to the lipoyl domains of lipoate-dependent enzymes, thereby converting the octanoylated domains into lipoylated derivatives. This chain is Lipoyl synthase, found in Treponema denticola (strain ATCC 35405 / DSM 14222 / CIP 103919 / JCM 8153 / KCTC 15104).